The primary structure comprises 363 residues: MAISAIGFEGFEKRLEITFFEPSIFVDPEGKGLRALCKAQLDEILGPAECTIVDSLANESVDSYVLSESSLFIYAYKIIIKTCGTTKLLRAIPPILRLAGKLSLDVKSVRYTRGSFIFPGAQSYAHRSFSEEVAVLDGYFGKLAAGSKAFVMGDPAKPQKWHVYSASAETISFEEPVYTLEMCMTGLKKEKASVFFKSQSPNAAVMTESSGIRKILPDSKICDFDFEPCGYSMNAIEGPAISTIHITPEDGFSYASFEAVGYDLKKTDLNQLVERVLACFEPSEFSIAIHAEIAANSMEHNCYVNVNGYSREEGGIEELGFGAASVFYQKFCKASTGFGATNKPKPALKCCWKEDKFEEEKDY.

Active-site residues include glutamate 9 and glutamate 12. Residue serine 69 is the Schiff-base intermediate with substrate; via pyruvic acid of the active site. At serine 69 the chain carries Pyruvic acid (Ser); by autocatalysis. Catalysis depends on cysteine 83, which acts as the Proton donor; for catalytic activity. Residues serine 232 and histidine 245 each act as proton acceptor; for processing activity in the active site.

This sequence belongs to the eukaryotic AdoMetDC family. It depends on pyruvate as a cofactor. Post-translationally, is synthesized initially as an inactive proenzyme. Formation of the active enzyme involves a self-maturation process in which the active site pyruvoyl group is generated from an internal serine residue via an autocatalytic post-translational modification. Two non-identical subunits are generated from the proenzyme in this reaction, and the pyruvate is formed at the N-terminus of the alpha chain, which is derived from the carboxyl end of the proenzyme. The post-translation cleavage follows an unusual pathway, termed non-hydrolytic serinolysis, in which the side chain hydroxyl group of the serine supplies its oxygen atom to form the C-terminus of the beta chain, while the remainder of the serine residue undergoes an oxidative deamination to produce ammonia and the pyruvoyl group blocking the N-terminus of the alpha chain.

It carries out the reaction S-adenosyl-L-methionine + H(+) = S-adenosyl 3-(methylsulfanyl)propylamine + CO2. It participates in amine and polyamine biosynthesis; S-adenosylmethioninamine biosynthesis; S-adenosylmethioninamine from S-adenosyl-L-methionine: step 1/1. The protein is S-adenosylmethionine decarboxylase proenzyme (SAMDC) of Spinacia oleracea (Spinach).